A 224-amino-acid chain; its full sequence is UPF0758 protein Csal_2972 (224 aa).

Residues 102–224 (ALTSPTLVRR…VVSFAERGWL (123 aa)) enclose the MPN domain. Positions 173, 175, and 186 each coordinate Zn(2+). The JAMM motif signature appears at 173–186 (HNHPSGVAEPSDAD).

This sequence belongs to the UPF0758 family.

This chain is UPF0758 protein Csal_2972, found in Chromohalobacter salexigens (strain ATCC BAA-138 / DSM 3043 / CIP 106854 / NCIMB 13768 / 1H11).